A 537-amino-acid polypeptide reads, in one-letter code: Cytochrome P450 86A8 (537 aa).

Residues 3–23 (ISTALMILSAITAYFLWLTFI) form a helical membrane-spanning segment. A heme-binding site is contributed by C458.

This sequence belongs to the cytochrome P450 family. Heme serves as cofactor. In terms of tissue distribution, expressed in leaves, stems, flowers and siliques. Expressed at low levels in roots.

The protein resides in the membrane. It carries out the reaction an organic molecule + reduced [NADPH--hemoprotein reductase] + O2 = an alcohol + oxidized [NADPH--hemoprotein reductase] + H2O + H(+). Functionally, catalyzes the omega-hydroxylation of various fatty acids (FA). Acts on saturated and unsaturated fatty acids with chain lengths from C12 to C18. May be involved in the biosynthesis of cutin in the epidermis which prevents post-genital organ fusions. Hydroxylated FAs may be important for trichome differentiation, establishment of apical dominance and senescence. The polypeptide is Cytochrome P450 86A8 (CYP86A8) (Arabidopsis thaliana (Mouse-ear cress)).